Consider the following 628-residue polypeptide: DNA mismatch repair protein MutL (628 aa).

The tract at residues 335 to 411 (SVDIEPESEQ…ASRNSEVSLP (77 aa)) is disordered. A compositionally biased stretch (polar residues) spans 343–353 (EQTTAWQTSPT).

It belongs to the DNA mismatch repair MutL/HexB family.

This protein is involved in the repair of mismatches in DNA. It is required for dam-dependent methyl-directed DNA mismatch repair. May act as a 'molecular matchmaker', a protein that promotes the formation of a stable complex between two or more DNA-binding proteins in an ATP-dependent manner without itself being part of a final effector complex. The chain is DNA mismatch repair protein MutL from Shewanella pealeana (strain ATCC 700345 / ANG-SQ1).